We begin with the raw amino-acid sequence, 836 residues long: Pentatricopeptide repeat-containing protein At1g79490, mitochondrial (836 aa).

The transit peptide at 1-85 (MIRGRTAKVI…QCRSIVRRFC (85 aa)) directs the protein to the mitochondrion. PPR repeat units follow at residues 204–238 (SDEC…SSSH), 242–276 (SFNA…GCKI), 277–311 (DTQT…DSLL), 312–346 (DGST…KLRP), 347–381 (SFSV…GHRP), 382–416 (SATM…GFRP), 417–451 (NFGL…GFLP), 452–486 (TPST…GLRP), 487–521 (GLSS…GYSV), 528–555 (VLMI…GIKT), 556–590 (NNFI…AGKV), and 591–625 (DLVL…KHKA). Residues 710-786 (LDVRNLSVGA…APGELVMEWF (77 aa)) enclose the Smr domain.

The protein belongs to the PPR family. P subfamily.

The protein resides in the mitochondrion. The chain is Pentatricopeptide repeat-containing protein At1g79490, mitochondrial (EMB2217) from Arabidopsis thaliana (Mouse-ear cress).